The chain runs to 107 residues: 2Fe-2S ferredoxin CtmE (107 aa).

One can recognise a 2Fe-2S ferredoxin-type domain in the interval 3 to 106 (VKVTYVDSAN…GLVIHTLEPE (104 aa)). [2Fe-2S] cluster is bound by residues Cys41, Cys47, Cys50, and Cys87.

Belongs to the adrenodoxin/putidaredoxin family. The cofactor is [2Fe-2S] cluster.

It functions in the pathway terpene metabolism; monoterpene degradation. Functionally, involved in the degradation of the cyclic monoterpene limonene. Probably part of an electron transfer system involved in the oxidation of limonene to perillyl alcohol. The sequence is that of 2Fe-2S ferredoxin CtmE from Castellaniella defragrans (strain DSM 12143 / CCUG 39792 / 65Phen) (Alcaligenes defragrans).